A 92-amino-acid chain; its full sequence is CRISPR-associated endoribonuclease Cas2 (92 aa).

Asp-9 provides a ligand contact to Mg(2+).

Belongs to the CRISPR-associated endoribonuclease Cas2 protein family. Homodimer, forms a heterotetramer with a Cas1 homodimer. It depends on Mg(2+) as a cofactor.

Functionally, CRISPR (clustered regularly interspaced short palindromic repeat), is an adaptive immune system that provides protection against mobile genetic elements (viruses, transposable elements and conjugative plasmids). CRISPR clusters contain sequences complementary to antecedent mobile elements and target invading nucleic acids. CRISPR clusters are transcribed and processed into CRISPR RNA (crRNA). Functions as a ssRNA-specific endoribonuclease. Involved in the integration of spacer DNA into the CRISPR cassette. In Aeropyrum pernix (strain ATCC 700893 / DSM 11879 / JCM 9820 / NBRC 100138 / K1), this protein is CRISPR-associated endoribonuclease Cas2.